The sequence spans 348 residues: Spermidine/putrescine import ATP-binding protein PotA (348 aa).

The ABC transporter domain occupies isoleucine 6–isoleucine 236. Glycine 38–threonine 45 is an ATP binding site.

It belongs to the ABC transporter superfamily. Spermidine/putrescine importer (TC 3.A.1.11.1) family. The complex is composed of two ATP-binding proteins (PotA), two transmembrane proteins (PotB and PotC) and a solute-binding protein (PotD).

The protein resides in the cell membrane. It carries out the reaction ATP + H2O + polyamine-[polyamine-binding protein]Side 1 = ADP + phosphate + polyamineSide 2 + [polyamine-binding protein]Side 1.. Its function is as follows. Part of the ABC transporter complex PotABCD involved in spermidine/putrescine import. Responsible for energy coupling to the transport system. In Desulfitobacterium hafniense (strain Y51), this protein is Spermidine/putrescine import ATP-binding protein PotA.